The sequence spans 62 residues: Photosystem II reaction center X protein (62 aa).

The chain crosses the membrane as a helical span at residues 26 to 46; the sequence is IASFFAAALLIVIPAAAFLIF.

Belongs to the PsbX family. Type 2 subfamily. As to quaternary structure, PSII consists of a core antenna complex that captures photons, and an electron transfer chain that converts photonic excitation into a charge separation. PSII forms dimeric complexes.

It is found in the cellular thylakoid membrane. Functionally, involved in the binding and/or turnover of quinones at the Q(B) site of Photosystem II. The chain is Photosystem II reaction center X protein from Prochlorococcus marinus subsp. pastoris (strain CCMP1986 / NIES-2087 / MED4).